The sequence spans 70 residues: Conotoxin TsMLKM-011 (70 aa).

The first 24 residues, Met1–Ala24, serve as a signal peptide directing secretion. A propeptide spanning residues Asp25–Arg54 is cleaved from the precursor. Disulfide bonds link Cys56-Cys66, Cys57-Cys68, and Cys62-Cys69.

This sequence belongs to the conotoxin M superfamily. In terms of tissue distribution, expressed by the venom duct.

The protein resides in the secreted. The polypeptide is Conotoxin TsMLKM-011 (Conus tessulatus (Tessellate cone)).